Here is a 581-residue protein sequence, read N- to C-terminus: Laccase-2 (581 aa).

The N-terminal stretch at 1 to 19 is a signal peptide; that stretch reads MKYSTVFTALTALFAQASA. Plastocyanin-like domains are found at residues 74–191 and 197–353; these read SVEN…GPAT and DVGA…YDSS. N-linked (GlcNAc...) asparagine glycans are attached at residues Asn77, Asn93, and Asn120. His125, His127, His169, and His171 together coordinate Cu cation. Cys146 and Cys562 form a disulfide bridge. 6 N-linked (GlcNAc...) asparagine glycosylation sites follow: Asn232, Asn283, Asn343, Asn408, Asn427, and Asn441. The Plastocyanin-like 3 domain occupies 413–547; that stretch reads LLDWSSPTTL…AMQFVESQSS (135 aa). 7 residues coordinate Cu cation: His464, His467, His469, His526, Cys527, His528, and His532.

This sequence belongs to the multicopper oxidase family. It depends on Cu cation as a cofactor.

Its subcellular location is the secreted. It carries out the reaction 4 hydroquinone + O2 = 4 benzosemiquinone + 2 H2O. Lignin degradation and detoxification of lignin-derived products. This chain is Laccase-2 (lcc2), found in Botryotinia fuckeliana (Noble rot fungus).